The chain runs to 1453 residues: MIKCLSVEVQAKLRSGLAISSLGQCVEELALNSIDAEAKCVAVRVNMETFQVQVIDNGFGMGSDDVEKVGNRYFTSKCHSVQDLENPRFYGFRGEALANIADMASAVEISSKKNRTMKTFVKLFQSGKALKACEADVTRASAGTTVTVYNLFYQLPVRRKCMDPRLEFEKVRQRIEALSLMHPSISFSLRNDVSGSMVLQLPKTKDVCSRFCQIYGLGKSQKLREISFKYKEFELSGYISSEAHYNKNMQFLFVNKRLVLRTKLHKLIDFLLRKESIICKPKNGPTSRQMNSSLRHRSTPELYGIYVINVQCQFCEYDVCMEPAKTLIEFQNWDTLLFCIQEGVKMFLKQEKLFVELSGEDIKEFSEDNGFSLFDATLQKRVTSDERSNFQEACNNILDSYEMFNLQSKAVKRKTTAENVNTQSSRDSEATRKNTNDAFLYIYESGGPGHSKMTEPSLQNKDSSCSESKMLEQETIVASEAGENEKHKKSFLEHSSLENPCGTSLEMFLSPFQTPCHFEESGQDLEIWKESTTVNGMAANILKNNRIQNQPKRFKDATEVGCQPLPFATTLWGVHSAQTEKEKKKESSNCGRRNVFSYGRVKLCSTGFITHVVQNEKTKSTETEHSFKNYVRPGPTRAQETFGNRTRHSVETPDIKDLASTLSKESGQLPNKKNCRTNISYGLENEPTATYTMFSAFQEGSKKSQTDCILSDTSPSFPWYRHVSNDSRKTDKLIGFSKPIVRKKLSLSSQLGSLEKFKRQYGKVENPLDTEVEESNGVTTNLSLQVEPDILLKDKNRLENSDVCKITTMEHSDSDSSCQPASHILNSEKFPFSKDEDCLEQQMPSLRESPMTLKELSLFNRKPLDLEKSSESLASKLSRLKGSERETQTMGMMSRFNELPNSDSSRKDSKLCSVLTQDFCMLFNNKHEKTENGVIPTSDSATQDNSFNKNSKTHSNSNTTENCVISETPLVLPYNNSKVTGKDSDVLIRASEQQIGSLDSPSGMLMNPVEDATGDQNGICFQSEESKARACSETEESNTCCSDWQRHFDVALGRMVYVNKMTGLSTFIAPTEDIQAACTKDLTTVAVDVVLENGSQYRCQPFRSDLVLPFLPRARAERTVMRQDNRDTVDDTVSSESLQSLFSEWDNPVFARYPEVAVDVSSGQAESLAVKIHNILYPYRFTKGMIHSMQVLQQVDNKFIACLMSTKTEENGEAGGNLLVLVDQHAAHERIRLEQLIIDSYEKQQAQGSGRKKLLSSTLIPPLEITVTEEQRRLLWCYHKNLEDLGLEFVFPDTSDSLVLVGKVPLCFVEREANELRRGRSTVTKSIVEEFIREQLELLQTTGGIQGTLPLTVQKVLASQACHGAIKFNDGLSLQESCRLIEALSSCQLPFQCAHGRPSMLPLADIDHLEQEKQIKPNLTKLRKMAQAWRLFGKAECDTRQSLQQSMPPCEPP.

2 disordered regions span residues 624-650 (EHSF…RHSV) and 933-960 (GVIP…SNTT). Residues 935–944 (IPTSDSATQD) show a composition bias toward polar residues. Over residues 945-960 (NSFNKNSKTHSNSNTT) the composition is skewed to low complexity.

It belongs to the DNA mismatch repair MutL/HexB family. As to quaternary structure, heterodimer of MLH1 and MLH3. Interacts with MTMR15/FAN1. In terms of tissue distribution, ubiquitous.

The protein resides in the nucleus. Probably involved in the repair of mismatches in DNA. This is DNA mismatch repair protein Mlh3 (MLH3) from Homo sapiens (Human).